A 289-amino-acid chain; its full sequence is Glycerol facilitator-aquaporin gla (289 aa).

Transmembrane regions (helical) follow at residues 10–30 (ITEF…VANV) and 41–61 (SWMI…VAFG). The NPA 1 signature appears at 68 to 70 (NPA). The next 3 membrane-spanning stretches (helical) occupy residues 87–107 (AQYI…IVMV), 151–171 (FLGS…FFGS), and 209–229 (MIAH…LGGP). Positions 235 to 237 (NPA) match the NPA 2 motif. The helical transmembrane segment at 264 to 284 (WYAWVPVLAPILASLAAVALF) threads the bilayer.

This sequence belongs to the MIP/aquaporin (TC 1.A.8) family.

It is found in the cell membrane. Its function is as follows. Mixed channel protein that transports both water and glycerol. The sequence is that of Glycerol facilitator-aquaporin gla (gla) from Lactococcus lactis subsp. cremoris (Streptococcus cremoris).